The following is a 544-amino-acid chain: Shootin-1 (544 aa).

Coiled coils occupy residues 17–100, 141–184, and 259–349; these read SNQV…LKRK, IVIT…EKHD, and EALQ…QVSN. Positions 343 to 544 are disordered; the sequence is KLQQVSNPPT…TTTICTEQLS (202 aa). Residues 352–371 show a composition bias toward pro residues; sequence TAAPAPPPPPPPPPPPPPPS. The segment covering 372-383 has biased composition (low complexity); sequence SSSSNPLSSLLS. Residues 397–412 are compositionally biased toward basic and acidic residues; that stretch reads LVEKDSSEKSPEKDVR. The segment covering 469-479 has biased composition (pro residues); it reads SSSPGPRPPSP. Residues 480 to 504 adopt a coiled-coil conformation; that stretch reads SEKSELEKALQRRREAVKSAKNNTN. Over residues 481–497 the composition is skewed to basic and acidic residues; it reads EKSELEKALQRRREAVK. Residues 499 to 544 show a composition bias toward polar residues; sequence AKNNTNPSSVVDLTQIKQTRSEPGQNTGDQETLRHTTTTICTEQLS.

It belongs to the shootin family.

It is found in the perikaryon. It localises to the cell projection. The protein localises to the axon. Its subcellular location is the growth cone. The protein resides in the cytoplasm. It is found in the cytoskeleton. It localises to the filopodium. The protein localises to the lamellipodium. In terms of biological role, involved in the generation of internal asymmetric signals required for neuronal polarization and neurite outgrowth. The chain is Shootin-1 from Danio rerio (Zebrafish).